The chain runs to 614 residues: Chaperone protein DnaK (614 aa).

Phosphothreonine; by autocatalysis is present on threonine 175. A disordered region spans residues 577–614 (QAGGAEGAADPNAAAGGAQSAPHDDNVVDADFKVDEDK). Residues 583 to 597 (GAADPNAAAGGAQSA) are compositionally biased toward low complexity. The span at 598 to 614 (PHDDNVVDADFKVDEDK) shows a compositional bias: basic and acidic residues.

It belongs to the heat shock protein 70 family.

Acts as a chaperone. The sequence is that of Chaperone protein DnaK from Clostridium beijerinckii (strain ATCC 51743 / NCIMB 8052) (Clostridium acetobutylicum).